Here is a 441-residue protein sequence, read N- to C-terminus: Peroxisome proliferator-activated receptor delta (441 aa).

A compositionally biased stretch (acidic residues) spans Met-1–Glu-22. The tract at residues Met-1–Leu-54 is disordered. Residues Leu-37–Leu-54 show a composition bias toward low complexity. A DNA-binding region (nuclear receptor) is located at residues Asn-71–Phe-145. 2 consecutive NR C4-type zinc fingers follow at residues Cys-74 to Cys-94 and Cys-111 to Cys-133. The NR LBD domain maps to Phe-211 to Asp-439.

The protein belongs to the nuclear hormone receptor family. NR1 subfamily. As to quaternary structure, heterodimer with the retinoid X receptor. Interacts (via domain NR LBD) with CRY1 and CRY2 in a ligand-dependent manner. 'Lys-48'-linked polyubiquitinated; leading to proteasomal degradation. Deubiquitinated and stabilized by OTUD3. Ubiquitous with maximal levels in placenta and skeletal muscle.

The protein localises to the nucleus. Ligand-activated transcription factor key mediator of energy metabolism in adipose tissues. Receptor that binds peroxisome proliferators such as hypolipidemic drugs and fatty acids. Has a preference for poly-unsaturated fatty acids, such as gamma-linoleic acid and eicosapentanoic acid. Once activated by a ligand, the receptor binds to promoter elements of target genes. Regulates the peroxisomal beta-oxidation pathway of fatty acids. Functions as transcription activator for the acyl-CoA oxidase gene. Decreases expression of NPC1L1 once activated by a ligand. This is Peroxisome proliferator-activated receptor delta from Homo sapiens (Human).